The primary structure comprises 235 residues: Biosynthetic peptidoglycan transglycosylase (235 aa).

The chain crosses the membrane as a helical span at residues 12–34 (GLGKLLLAALLSTIVSVALLRFI).

It belongs to the glycosyltransferase 51 family.

It localises to the cell inner membrane. It catalyses the reaction [GlcNAc-(1-&gt;4)-Mur2Ac(oyl-L-Ala-gamma-D-Glu-L-Lys-D-Ala-D-Ala)](n)-di-trans,octa-cis-undecaprenyl diphosphate + beta-D-GlcNAc-(1-&gt;4)-Mur2Ac(oyl-L-Ala-gamma-D-Glu-L-Lys-D-Ala-D-Ala)-di-trans,octa-cis-undecaprenyl diphosphate = [GlcNAc-(1-&gt;4)-Mur2Ac(oyl-L-Ala-gamma-D-Glu-L-Lys-D-Ala-D-Ala)](n+1)-di-trans,octa-cis-undecaprenyl diphosphate + di-trans,octa-cis-undecaprenyl diphosphate + H(+). It participates in cell wall biogenesis; peptidoglycan biosynthesis. Functionally, peptidoglycan polymerase that catalyzes glycan chain elongation from lipid-linked precursors. The polypeptide is Biosynthetic peptidoglycan transglycosylase (Aeromonas hydrophila subsp. hydrophila (strain ATCC 7966 / DSM 30187 / BCRC 13018 / CCUG 14551 / JCM 1027 / KCTC 2358 / NCIMB 9240 / NCTC 8049)).